A 286-amino-acid chain; its full sequence is Flagellin FlaB1 (286 aa).

A required for interaction with FliW region spans residues 231–286 (LDIAAENLQAAESRIRDANIAKQMVEYTKNQVLTQSGTAMLAQANTSAQSILSILR).

This sequence belongs to the bacterial flagellin family. As to quaternary structure, the flagellum consists of an outer layer composed of repeating units of FlaA around a core that contains several antigenically related polypeptides. Interacts via its C-terminus with FliW; a synthetic peptide of residues 229-247 partially blocks binding to FliW.

Its subcellular location is the periplasmic flagellum. It is found in the periplasm. Functionally, component of the core of the flagella. This is Flagellin FlaB1 (flaB1) from Treponema pallidum (strain Nichols).